The chain runs to 1887 residues: Fatty acid synthase subunit alpha (1887 aa).

Residue lysine 37 forms a Glycyl lysine isopeptide (Lys-Gly) (interchain with G-Cter in ubiquitin) linkage. Residue serine 50 is modified to Phosphoserine. The segment at glutamate 96 to proline 120 is disordered. The segment covering alanine 98–alanine 108 has biased composition (basic and acidic residues). A Carrier domain is found at valine 145–alanine 220. Residue serine 180 is modified to O-(pantetheine 4'-phosphoryl)serine. Residue serine 523 is modified to Phosphoserine. Residues aspartate 675–glycine 874 are beta-ketoacyl reductase. Serine 958 carries the phosphoserine modification. The region spanning glutamine 1123–histidine 1657 is the Ketosynthase family 3 (KS3) domain. Cysteine 1305 (for beta-ketoacyl synthase activity) is an active-site residue. At serine 1440 the chain carries Phosphoserine. Residues histidine 1542 and histidine 1583 each act as for beta-ketoacyl synthase activity in the active site. 3 residues coordinate Mg(2+): aspartate 1772, valine 1773, and glutamate 1774. Acetyl-CoA is bound by residues aspartate 1772–glutamate 1774, tyrosine 1798, serine 1808, glutamate 1817–serine 1827, arginine 1841–lysine 1844, and isoleucine 1871–histidine 1873. The Mg(2+) site is built by serine 1872 and histidine 1873.

This sequence belongs to the thiolase-like superfamily. Fungal fatty acid synthetase subunit alpha family. [Alpha(6)beta(6)] hexamers of two multifunctional subunits (alpha and beta). Post-translationally, 4'-phosphopantetheine is transferred from CoA to a specific serine of the Acyl carrier domain by the C-terminal PPT domain. This modification is essential for activity because fatty acids are bound in thioester linkage to the sulfhydryl of the prosthetic group.

The catalysed reaction is acetyl-CoA + n malonyl-CoA + 2n NADPH + 4n H(+) = a long-chain-acyl-CoA + n CoA + n CO2 + 2n NADP(+).. It carries out the reaction a fatty acyl-[ACP] + malonyl-[ACP] + H(+) = a 3-oxoacyl-[ACP] + holo-[ACP] + CO2. The enzyme catalyses a (3R)-hydroxyacyl-[ACP] + NADP(+) = a 3-oxoacyl-[ACP] + NADPH + H(+). With respect to regulation, inhibited by cerulenin by covalent binding to active site of the ketoacyl synthase (KS) region. Functionally, fatty acid synthetase catalyzes the formation of long-chain fatty acids from acetyl-CoA, malonyl-CoA and NADPH. The alpha subunit contains domains for: acyl carrier protein, 3-oxoacyl-[acyl-carrier-protein] reductase, and 3-oxoacyl-[acyl-carrier-protein] synthase. This subunit coordinates the binding of the six beta subunits to the enzyme complex. This chain is Fatty acid synthase subunit alpha (FAS2), found in Saccharomyces cerevisiae (strain ATCC 204508 / S288c) (Baker's yeast).